Here is a 343-residue protein sequence, read N- to C-terminus: MDIVLATGGTGGHIFPAITLARAIKRQGYDSILFADKKTGKNTDVKDYTLPLNKPGGNKFRFFLLLIYSCVLALYQIRKLKPKLVIGFGGYASFPTLLAAKVLSIPIILHEQNAVLGRVNKFFFNSAELIATSFPETKYAKGNKCVFIGNFVDIKAKSHSSTKKILTVLIIAGSQGANFFDDVVSSVICNLPIEIRKKIRVVQQCMKKNMNKVEGLYKGGQVICELSEFFDDMGSRLTDAHLVISRAGATSIAEITLARRPAIYIPYPCSKDDHQFYNAEYIKDSGAAVVVEQNSEVKKNLTKLLVNLLGDSQKLRDMANNTKKIRIKNGVTEFIRIVIHKLG.

Residues Thr-10–Gly-12, Asn-113, Ser-174, and Gln-275 each bind UDP-N-acetyl-alpha-D-glucosamine.

Belongs to the glycosyltransferase 28 family. MurG subfamily.

The protein resides in the cell membrane. It catalyses the reaction di-trans,octa-cis-undecaprenyl diphospho-N-acetyl-alpha-D-muramoyl-L-alanyl-D-glutamyl-meso-2,6-diaminopimeloyl-D-alanyl-D-alanine + UDP-N-acetyl-alpha-D-glucosamine = di-trans,octa-cis-undecaprenyl diphospho-[N-acetyl-alpha-D-glucosaminyl-(1-&gt;4)]-N-acetyl-alpha-D-muramoyl-L-alanyl-D-glutamyl-meso-2,6-diaminopimeloyl-D-alanyl-D-alanine + UDP + H(+). It functions in the pathway cell wall biogenesis; peptidoglycan biosynthesis. In terms of biological role, cell wall formation. Catalyzes the transfer of a GlcNAc subunit on undecaprenyl-pyrophosphoryl-MurNAc-pentapeptide (lipid intermediate I) to form undecaprenyl-pyrophosphoryl-MurNAc-(pentapeptide)GlcNAc (lipid intermediate II). The chain is UDP-N-acetylglucosamine--N-acetylmuramyl-(pentapeptide) pyrophosphoryl-undecaprenol N-acetylglucosamine transferase from Wolbachia sp. subsp. Brugia malayi (strain TRS).